The following is a 183-amino-acid chain: Archaemetzincin (183 aa).

A Zn(2+)-binding site is contributed by histidine 131. Glutamate 132 serves as the catalytic Proton acceptor. Positions 135, 141, 142, 147, 166, and 169 each coordinate Zn(2+).

This sequence belongs to the peptidase M54 family. As to quaternary structure, monomer. Zn(2+) serves as cofactor.

Functionally, probable zinc metalloprotease whose natural substrate is unknown. This Saccharolobus islandicus (strain L.S.2.15 / Lassen #1) (Sulfolobus islandicus) protein is Archaemetzincin.